We begin with the raw amino-acid sequence, 164 residues long: MRVGVYPGSFDPITKGHLDLIERAASKFDKVIVAVLININKKGMFSIEERVNLIEKCVAKYNNVEVKSFNGLLIDFVRKEKADVIIKGLRSVTDFEYEFQMALMNRELANEVETVFMVTSPNYSYISSSAIKQVASFSGEIKNFVPKEIVEDLEERIISLRGEG.

Ser-9 contacts substrate. Residues 9–10 (SF) and His-17 each bind ATP. Lys-41, Leu-73, and Lys-87 together coordinate substrate. Residues 88–90 (GLR), Glu-98, and 123–129 (YSYISSS) contribute to the ATP site.

This sequence belongs to the bacterial CoaD family. In terms of assembly, homohexamer. Requires Mg(2+) as cofactor.

The protein resides in the cytoplasm. The enzyme catalyses (R)-4'-phosphopantetheine + ATP + H(+) = 3'-dephospho-CoA + diphosphate. It participates in cofactor biosynthesis; coenzyme A biosynthesis; CoA from (R)-pantothenate: step 4/5. Its function is as follows. Reversibly transfers an adenylyl group from ATP to 4'-phosphopantetheine, yielding dephospho-CoA (dPCoA) and pyrophosphate. The protein is Phosphopantetheine adenylyltransferase of Clostridium perfringens (strain SM101 / Type A).